The primary structure comprises 398 residues: Putative glutamate--cysteine ligase 2 (398 aa).

This sequence belongs to the glutamate--cysteine ligase type 2 family. YbdK subfamily.

It carries out the reaction L-cysteine + L-glutamate + ATP = gamma-L-glutamyl-L-cysteine + ADP + phosphate + H(+). ATP-dependent carboxylate-amine ligase which exhibits weak glutamate--cysteine ligase activity. This is Putative glutamate--cysteine ligase 2 from Micrococcus luteus (strain ATCC 4698 / DSM 20030 / JCM 1464 / CCM 169 / CCUG 5858 / IAM 1056 / NBRC 3333 / NCIMB 9278 / NCTC 2665 / VKM Ac-2230) (Micrococcus lysodeikticus).